Reading from the N-terminus, the 181-residue chain is MTPTIRPDDPARATVEIATEDAAWDALDLEALAGRAVDATLVALDLPPAAFEVSILACDDARIATLNGEFRGKPTPTNVLSWPAEDRAPDTPGGAPHLPDPGDPMAAELGDLALAHGTCAREAAEAGKPLADHVTHLIVHGTLHLLGFDHETDADAARMEGLEVKILQTLNMANPYETPMV.

3 residues coordinate Zn(2+): His140, His144, and His150.

Belongs to the endoribonuclease YbeY family. Zn(2+) is required as a cofactor.

Its subcellular location is the cytoplasm. In terms of biological role, single strand-specific metallo-endoribonuclease involved in late-stage 70S ribosome quality control and in maturation of the 3' terminus of the 16S rRNA. The protein is Endoribonuclease YbeY of Dinoroseobacter shibae (strain DSM 16493 / NCIMB 14021 / DFL 12).